Consider the following 271-residue polypeptide: Putative phosphoenolpyruvate synthase regulatory protein (271 aa).

Position 151-158 (151-158 (GVSRSGKT)) interacts with ADP.

It belongs to the pyruvate, phosphate/water dikinase regulatory protein family. PSRP subfamily.

The enzyme catalyses [pyruvate, water dikinase] + ADP = [pyruvate, water dikinase]-phosphate + AMP + H(+). It catalyses the reaction [pyruvate, water dikinase]-phosphate + phosphate + H(+) = [pyruvate, water dikinase] + diphosphate. Its function is as follows. Bifunctional serine/threonine kinase and phosphorylase involved in the regulation of the phosphoenolpyruvate synthase (PEPS) by catalyzing its phosphorylation/dephosphorylation. The protein is Putative phosphoenolpyruvate synthase regulatory protein of Burkholderia lata (strain ATCC 17760 / DSM 23089 / LMG 22485 / NCIMB 9086 / R18194 / 383).